The following is a 206-amino-acid chain: MAGLHFFPALLALLMASLQTHQGFPMPSLSSLLSNAVQRANYLHNLAGDRYRDFEQNYISDEQRHSIKNSPAAYCYSESSPAPTGKEDARQKSDMDLLRFSLSLIQAWISPLQILGRPFGSPDAYDKLLDLEKGLQVLMRELEDGSSRGLSLLKHTYDKFSANQFSEEATLKNYSLLACFKKDMHKVETYLRVMKCRRFPESNCTI.

Positions 1–22 (MAGLHFFPALLALLMASLQTHQ) are cleaved as a signal peptide. 2 disulfides stabilise this stretch: cysteine 75-cysteine 179 and cysteine 196-cysteine 204.

The protein belongs to the somatotropin/prolactin family.

The protein resides in the secreted. Functionally, growth hormone plays an important role in growth control and is involved in the regulation of several anabolic processes. Implicated as an osmoregulatory substance important for seawater adaptation. The polypeptide is Somatotropin (gh) (Protopterus annectens (African lungfish)).